Consider the following 233-residue polypeptide: Lipoprotein-releasing system ATP-binding protein LolD (233 aa).

The ABC transporter domain maps to Leu6–Glu233. Gly42–Ser49 is an ATP binding site.

Belongs to the ABC transporter superfamily. Lipoprotein translocase (TC 3.A.1.125) family. In terms of assembly, the complex is composed of two ATP-binding proteins (LolD) and two transmembrane proteins (LolC and LolE).

It localises to the cell inner membrane. Part of the ABC transporter complex LolCDE involved in the translocation of mature outer membrane-directed lipoproteins, from the inner membrane to the periplasmic chaperone, LolA. Responsible for the formation of the LolA-lipoprotein complex in an ATP-dependent manner. This Shigella boydii serotype 4 (strain Sb227) protein is Lipoprotein-releasing system ATP-binding protein LolD.